The chain runs to 332 residues: Ferredoxin--NADP reductase (332 aa).

7 residues coordinate FAD: aspartate 33, glutamine 41, tyrosine 46, alanine 86, phenylalanine 120, aspartate 286, and threonine 327.

This sequence belongs to the ferredoxin--NADP reductase type 2 family. In terms of assembly, homodimer. FAD serves as cofactor.

It catalyses the reaction 2 reduced [2Fe-2S]-[ferredoxin] + NADP(+) + H(+) = 2 oxidized [2Fe-2S]-[ferredoxin] + NADPH. This Rickettsia bellii (strain OSU 85-389) protein is Ferredoxin--NADP reductase.